The chain runs to 423 residues: Putative competence-damage inducible protein (423 aa).

This sequence belongs to the CinA family.

This Streptococcus pyogenes serotype M49 (strain NZ131) protein is Putative competence-damage inducible protein.